The following is a 209-amino-acid chain: Uracil phosphoribosyltransferase (209 aa).

5-phospho-alpha-D-ribose 1-diphosphate is bound by residues Arg-79, Arg-104, and 131-139 (DPMLATGGS). Uracil is bound by residues Ile-194 and 199 to 201 (GDA). Asp-200 contacts 5-phospho-alpha-D-ribose 1-diphosphate.

This sequence belongs to the UPRTase family. Requires Mg(2+) as cofactor.

It carries out the reaction UMP + diphosphate = 5-phospho-alpha-D-ribose 1-diphosphate + uracil. It functions in the pathway pyrimidine metabolism; UMP biosynthesis via salvage pathway; UMP from uracil: step 1/1. Allosterically activated by GTP. Its function is as follows. Catalyzes the conversion of uracil and 5-phospho-alpha-D-ribose 1-diphosphate (PRPP) to UMP and diphosphate. The sequence is that of Uracil phosphoribosyltransferase from Finegoldia magna (strain ATCC 29328 / DSM 20472 / WAL 2508) (Peptostreptococcus magnus).